A 200-amino-acid chain; its full sequence is UPF0316 protein Mhun_0543 (200 aa).

The next 3 helical transmembrane spans lie at 3 to 23 (VGFL…IFLA), 44 to 64 (FIAP…IGQV), and 71 to 91 (PICY…GMEL).

It belongs to the UPF0316 family.

It is found in the cell membrane. This chain is UPF0316 protein Mhun_0543, found in Methanospirillum hungatei JF-1 (strain ATCC 27890 / DSM 864 / NBRC 100397 / JF-1).